The following is a 342-amino-acid chain: P21 prophage-derived major head protein (342 aa).

It belongs to the lambda phage major capsid protein family.

The polypeptide is P21 prophage-derived major head protein (Escherichia coli O6:H1 (strain CFT073 / ATCC 700928 / UPEC)).